The chain runs to 391 residues: Formate-dependent phosphoribosylglycinamide formyltransferase (391 aa).

N(1)-(5-phospho-beta-D-ribosyl)glycinamide contacts are provided by residues 18–19 (EL) and Glu78. ATP contacts are provided by residues Arg110, Lys151, 156-161 (SSGKGQ), 191-194 (EEFI), and Glu199. The 191-residue stretch at 115 to 305 (DLASKDLKIK…EFELHLRAFL (191 aa)) folds into the ATP-grasp domain. Mg(2+) is bound by residues Glu264 and Glu276. Residues Asp283, Lys353, and 360–361 (RR) each bind N(1)-(5-phospho-beta-D-ribosyl)glycinamide.

This sequence belongs to the PurK/PurT family. Homodimer.

The enzyme catalyses N(1)-(5-phospho-beta-D-ribosyl)glycinamide + formate + ATP = N(2)-formyl-N(1)-(5-phospho-beta-D-ribosyl)glycinamide + ADP + phosphate + H(+). It functions in the pathway purine metabolism; IMP biosynthesis via de novo pathway; N(2)-formyl-N(1)-(5-phospho-D-ribosyl)glycinamide from N(1)-(5-phospho-D-ribosyl)glycinamide (formate route): step 1/1. Involved in the de novo purine biosynthesis. Catalyzes the transfer of formate to 5-phospho-ribosyl-glycinamide (GAR), producing 5-phospho-ribosyl-N-formylglycinamide (FGAR). Formate is provided by PurU via hydrolysis of 10-formyl-tetrahydrofolate. In Prochlorococcus marinus (strain AS9601), this protein is Formate-dependent phosphoribosylglycinamide formyltransferase.